The following is a 486-amino-acid chain: BTB/POZ domain and ankyrin repeat-containing protein BOP (486 aa).

The BTB domain occupies S25–P115. The C2HC NPR-type zinc finger occupies R121–S135. Residues C124, C129, H131, and C134 each coordinate Zn(2+). 4 ANK repeats span residues Q257–D286, E287–Y316, A321–V350, and D354–L388. 2 disordered regions span residues E403–I442 and Q464–Y486. 2 stretches are compositionally biased toward low complexity: residues N406–T418 and S432–I442. Positions S466–D475 are enriched in basic and acidic residues.

The protein belongs to the plant 'ANKYRIN-BTB/POZ' family. 'NOOT-BOP-COCH-like' (NBCL) subfamily. Homodimer. In terms of tissue distribution, expressed in xylem vessels and parenchyma cells of pedicel vascular tissue in the abscission zone (AZ). Accumulates in developing root nodules and present in roots, especially in the upper part.

The protein localises to the nucleus. The protein resides in the cytoplasm. It is found in the cell membrane. Its pathway is protein modification; protein ubiquitination. Functionally, may act as a substrate-specific adapter of an E3 ubiquitin-protein ligase complex (CUL3-RBX1-BTB) which mediates the ubiquitination and subsequent proteasomal degradation of target proteins. Transcriptional co-regulator involved in promoting the fate and determination of leaf and flower meristems. Required for the abscission of senescent organs, probably by regulating the cell wall disorganization in abscission zones (AZs, e.g. pulvini at the base of leaves). Involved in the coordination of the symbiotic nodule developmental program; promotes the formation of root nodules by interacting directly with APP1 to modulate the expression of the nuclear transcription factor Y subunit (NF-YA1), a key nodulin. Necessary for the robust maintenance of nodule identity throughout the nodule developmental program. This is BTB/POZ domain and ankyrin repeat-containing protein BOP from Lupinus luteus (European yellow lupine).